Here is a 187-residue protein sequence, read N- to C-terminus: Elongation factor P (187 aa).

It belongs to the elongation factor P family.

It is found in the cytoplasm. It functions in the pathway protein biosynthesis; polypeptide chain elongation. Functionally, involved in peptide bond synthesis. Stimulates efficient translation and peptide-bond synthesis on native or reconstituted 70S ribosomes in vitro. Probably functions indirectly by altering the affinity of the ribosome for aminoacyl-tRNA, thus increasing their reactivity as acceptors for peptidyl transferase. This chain is Elongation factor P, found in Azobacteroides pseudotrichonymphae genomovar. CFP2.